The sequence spans 280 residues: Golgi to ER traffic protein 2 (280 aa).

Topologically, residues 1 to 149 (MPSDREKQRI…IAYNLYQQRK (149 aa)) are cytoplasmic. Residues 15 to 59 (RQAKMAKGGASDRLNKILSQGSSVKTSAVSVLDQPQPADHDPEGM) form a disordered region. Positions 31–43 (ILSQGSSVKTSAV) are enriched in polar residues. The helical transmembrane segment at 150 to 170 (VRHRFLVVRMVSILANFVYHF) threads the bilayer. Over 171–197 (LTISDFSFSPSANPFIRSIPPTSSVSS) the chain is Lumenal. Residues 198–217 (FFQIFVAIEAVLVAAYIAAS) traverse the membrane as a helical segment. The Cytoplasmic segment spans residues 218-257 (RNVPSNNNGLLVKGISMAAMFVPKLQRFQPLIMKIIGCWD). The helical transmembrane segment at 258-278 (TVTFVLNDLGLVVLLFGLISF) threads the bilayer. At 279 to 280 (RR) the chain is on the lumenal side.

Belongs to the GET2 family. In terms of assembly, component of the Golgi to ER traffic (GET) complex, which is composed of GET1, GET2 and GET3. Within the complex, GET1 and GET2 form a heterotetramer which is stabilized by phosphatidylinositol binding and which binds to the GET3 homodimer.

It is found in the endoplasmic reticulum membrane. Its subcellular location is the golgi apparatus membrane. Functionally, required for the post-translational delivery of tail-anchored (TA) proteins to the endoplasmic reticulum. Together with GET1, acts as a membrane receptor for soluble GET3, which recognizes and selectively binds the transmembrane domain of TA proteins in the cytosol. The GET complex cooperates with the HDEL receptor ERD2 to mediate the ATP-dependent retrieval of resident ER proteins that contain a C-terminal H-D-E-L retention signal from the Golgi to the ER. This chain is Golgi to ER traffic protein 2, found in Meyerozyma guilliermondii (strain ATCC 6260 / CBS 566 / DSM 6381 / JCM 1539 / NBRC 10279 / NRRL Y-324) (Yeast).